A 338-amino-acid polypeptide reads, in one-letter code: Dihydroorotate dehydrogenase (quinone) (338 aa).

FMN contacts are provided by residues 59-63 (AGLDK) and Thr-83. Residue Lys-63 participates in substrate binding. Residue 108–112 (NRMGF) participates in substrate binding. The FMN site is built by Asn-136 and Asn-169. Asn-169 lines the substrate pocket. Ser-172 acts as the Nucleophile in catalysis. Asn-174 is a binding site for substrate. Lys-214 and Thr-242 together coordinate FMN. 243-244 (NT) contributes to the substrate binding site. FMN is bound by residues Gly-265, Gly-294, and 315–316 (YS).

The protein belongs to the dihydroorotate dehydrogenase family. Type 2 subfamily. Monomer. The cofactor is FMN.

The protein localises to the cell membrane. The enzyme catalyses (S)-dihydroorotate + a quinone = orotate + a quinol. Its pathway is pyrimidine metabolism; UMP biosynthesis via de novo pathway; orotate from (S)-dihydroorotate (quinone route): step 1/1. In terms of biological role, catalyzes the conversion of dihydroorotate to orotate with quinone as electron acceptor. In Azoarcus sp. (strain BH72), this protein is Dihydroorotate dehydrogenase (quinone).